Consider the following 300-residue polypeptide: Ubiquinone biosynthesis protein COQ4, mitochondrial (300 aa).

Residues His-173, Asp-174, His-177, and Glu-189 each coordinate Zn(2+).

Belongs to the COQ4 family. In terms of assembly, component of a multi-subunit COQ enzyme complex, composed of at least COQ3, COQ4, COQ5, COQ6, COQ7 and COQ9. The cofactor is Zn(2+).

It localises to the mitochondrion inner membrane. It carries out the reaction a 4-hydroxy-3-methoxy-5-(all-trans-polyprenyl)benzoate + H(+) = a 2-methoxy-6-(all-trans-polyprenyl)phenol + CO2. It participates in cofactor biosynthesis; ubiquinone biosynthesis. Its function is as follows. Lyase that catalyzes the C1-decarboxylation of 4-hydroxy-3-methoxy-5-(all-trans-polyprenyl)benzoic acid into 2-methoxy-6-(all-trans-polyprenyl)phenol during ubiquinone biosynthesis. The polypeptide is Ubiquinone biosynthesis protein COQ4, mitochondrial (Cryptococcus neoformans var. neoformans serotype D (strain JEC21 / ATCC MYA-565) (Filobasidiella neoformans)).